We begin with the raw amino-acid sequence, 202 residues long: Protein GrpE (202 aa).

Residues Met-1–Thr-14 show a composition bias toward polar residues. Positions Met-1 to Leu-58 are disordered. The span at Arg-21 to Leu-58 shows a compositional bias: low complexity.

Belongs to the GrpE family. Homodimer.

It is found in the cytoplasm. In terms of biological role, participates actively in the response to hyperosmotic and heat shock by preventing the aggregation of stress-denatured proteins, in association with DnaK and GrpE. It is the nucleotide exchange factor for DnaK and may function as a thermosensor. Unfolded proteins bind initially to DnaJ; upon interaction with the DnaJ-bound protein, DnaK hydrolyzes its bound ATP, resulting in the formation of a stable complex. GrpE releases ADP from DnaK; ATP binding to DnaK triggers the release of the substrate protein, thus completing the reaction cycle. Several rounds of ATP-dependent interactions between DnaJ, DnaK and GrpE are required for fully efficient folding. The protein is Protein GrpE of Paraburkholderia phymatum (strain DSM 17167 / CIP 108236 / LMG 21445 / STM815) (Burkholderia phymatum).